Consider the following 196-residue polypeptide: NADH-quinone oxidoreductase subunit C (196 aa).

The protein belongs to the complex I 30 kDa subunit family. As to quaternary structure, NDH-1 is composed of 14 different subunits. Subunits NuoB, C, D, E, F, and G constitute the peripheral sector of the complex.

The protein localises to the cell inner membrane. It carries out the reaction a quinone + NADH + 5 H(+)(in) = a quinol + NAD(+) + 4 H(+)(out). NDH-1 shuttles electrons from NADH, via FMN and iron-sulfur (Fe-S) centers, to quinones in the respiratory chain. The immediate electron acceptor for the enzyme in this species is believed to be ubiquinone. Couples the redox reaction to proton translocation (for every two electrons transferred, four hydrogen ions are translocated across the cytoplasmic membrane), and thus conserves the redox energy in a proton gradient. This chain is NADH-quinone oxidoreductase subunit C, found in Rickettsia bellii (strain RML369-C).